The chain runs to 185 residues: Hypoxanthine/guanine phosphoribosyltransferase (185 aa).

Belongs to the purine/pyrimidine phosphoribosyltransferase family. Archaeal HPRT subfamily. In terms of assembly, homodimer.

Its subcellular location is the cytoplasm. The enzyme catalyses IMP + diphosphate = hypoxanthine + 5-phospho-alpha-D-ribose 1-diphosphate. It carries out the reaction GMP + diphosphate = guanine + 5-phospho-alpha-D-ribose 1-diphosphate. It participates in purine metabolism; IMP biosynthesis via salvage pathway; IMP from hypoxanthine: step 1/1. In terms of biological role, catalyzes a salvage reaction resulting in the formation of IMP that is energically less costly than de novo synthesis. The chain is Hypoxanthine/guanine phosphoribosyltransferase from Methanococcus vannielii (strain ATCC 35089 / DSM 1224 / JCM 13029 / OCM 148 / SB).